We begin with the raw amino-acid sequence, 165 residues long: Cystatin-like protein (165 aa).

An N-terminal signal peptide occupies residues 1 to 19 (MDVALKLLLLAALTLLASA). Disulfide bonds link C80/C92 and C104/C118.

In terms of biological role, involved in hypoxia tolerance. This Clarias batrachus (Walking catfish) protein is Cystatin-like protein.